The primary structure comprises 203 residues: Putative B3 domain-containing protein At1g50220 (203 aa).

The segment at residues 99–195 (DIVGNVALPK…KFIVLNFQHK (97 aa)) is a DNA-binding region (TF-B3).

It localises to the nucleus. The sequence is that of Putative B3 domain-containing protein At1g50220 from Arabidopsis thaliana (Mouse-ear cress).